The following is a 425-amino-acid chain: Enolase (425 aa).

A (2R)-2-phosphoglycerate-binding site is contributed by Gln163. Glu205 acts as the Proton donor in catalysis. Mg(2+)-binding residues include Asp242, Glu285, and Asp312. 4 residues coordinate (2R)-2-phosphoglycerate: Lys337, Arg366, Ser367, and Lys388. The active-site Proton acceptor is the Lys337.

The protein belongs to the enolase family. Mg(2+) serves as cofactor.

It localises to the cytoplasm. The protein resides in the secreted. Its subcellular location is the cell surface. It carries out the reaction (2R)-2-phosphoglycerate = phosphoenolpyruvate + H2O. It functions in the pathway carbohydrate degradation; glycolysis; pyruvate from D-glyceraldehyde 3-phosphate: step 4/5. Functionally, catalyzes the reversible conversion of 2-phosphoglycerate (2-PG) into phosphoenolpyruvate (PEP). It is essential for the degradation of carbohydrates via glycolysis. This chain is Enolase, found in Ruegeria pomeroyi (strain ATCC 700808 / DSM 15171 / DSS-3) (Silicibacter pomeroyi).